Consider the following 738-residue polypeptide: Ethylene receptor (738 aa).

A run of 3 helical transmembrane segments spans residues 23 to 43, 54 to 74, and 92 to 112; these read ISDFFIALAYFSIPLELIYFV, VLVQFGAFIVLCGATHLINLW, and VLTAVVSCATALMLVHIIPDL. Residues cysteine 65 and histidine 69 each coordinate Cu cation. Residues 158–307 enclose the GAF domain; it reads DRHTILKTTL…VVADQVAVAL (150 aa). In terms of domain architecture, Histidine kinase spans 350–589; the sequence is VMNHEMRTPM…IFIVKLGFAE (240 aa). At histidine 353 the chain carries Phosphohistidine; by autocatalysis. The Response regulatory domain occupies 612 to 729; the sequence is PGLKVLVMDD…KMRSVLSELL (118 aa). Aspartate 660 is subject to 4-aspartylphosphate.

The protein belongs to the ethylene receptor family. As to quaternary structure, homodimer; disulfide-linked. Requires Cu cation as cofactor. In terms of processing, activation probably requires a transfer of a phosphate group between a His in the transmitter domain and an Asp of the receiver domain.

The protein localises to the endoplasmic reticulum membrane. It carries out the reaction ATP + protein L-histidine = ADP + protein N-phospho-L-histidine.. In terms of biological role, may act early in the ethylene signal transduction pathway, possibly as an ethylene receptor, or as a regulator of the pathway. This chain is Ethylene receptor (ETR1), found in Prunus persica (Peach).